The chain runs to 349 residues: 6-phosphogluconolactonase (349 aa).

Residues 125 to 151 (LQSPVSEAAHTGKGPHERQEKPHTHYA) are disordered. Residues 138-147 (GPHERQEKPH) show a composition bias toward basic and acidic residues.

Belongs to the cycloisomerase 2 family.

It catalyses the reaction 6-phospho-D-glucono-1,5-lactone + H2O = 6-phospho-D-gluconate + H(+). Its pathway is carbohydrate degradation; pentose phosphate pathway; D-ribulose 5-phosphate from D-glucose 6-phosphate (oxidative stage): step 2/3. In terms of biological role, catalyzes the hydrolysis of 6-phosphogluconolactone to 6-phosphogluconate. In Bacillus subtilis (strain 168), this protein is 6-phosphogluconolactonase (pgl).